Reading from the N-terminus, the 229-residue chain is Cytochrome c oxidase subunit 2 (229 aa).

Residues M1–H26 are Mitochondrial intermembrane-facing. Residues A27 to N48 traverse the membrane as a helical segment. Topologically, residues S49–E62 are mitochondrial matrix. A helical membrane pass occupies residues M63–R82. The Mitochondrial intermembrane portion of the chain corresponds to L83–S229. 6 residues coordinate Cu cation: H161, C196, E198, C200, H204, and M207. E198 is a binding site for Mg(2+).

It belongs to the cytochrome c oxidase subunit 2 family. In terms of assembly, component of the cytochrome c oxidase (complex IV, CIV), a multisubunit enzyme composed of a catalytic core of 3 subunits and several supernumerary subunits. The complex exists as a monomer or a dimer and forms supercomplexes (SCs) in the inner mitochondrial membrane with ubiquinol-cytochrome c oxidoreductase (cytochrome b-c1 complex, complex III, CIII). The cofactor is Cu cation.

The protein localises to the mitochondrion inner membrane. It carries out the reaction 4 Fe(II)-[cytochrome c] + O2 + 8 H(+)(in) = 4 Fe(III)-[cytochrome c] + 2 H2O + 4 H(+)(out). Its function is as follows. Component of the cytochrome c oxidase, the last enzyme in the mitochondrial electron transport chain which drives oxidative phosphorylation. The respiratory chain contains 3 multisubunit complexes succinate dehydrogenase (complex II, CII), ubiquinol-cytochrome c oxidoreductase (cytochrome b-c1 complex, complex III, CIII) and cytochrome c oxidase (complex IV, CIV), that cooperate to transfer electrons derived from NADH and succinate to molecular oxygen, creating an electrochemical gradient over the inner membrane that drives transmembrane transport and the ATP synthase. Cytochrome c oxidase is the component of the respiratory chain that catalyzes the reduction of oxygen to water. Electrons originating from reduced cytochrome c in the intermembrane space (IMS) are transferred via the dinuclear copper A center (CU(A)) of subunit 2 and heme A of subunit 1 to the active site in subunit 1, a binuclear center (BNC) formed by heme A3 and copper B (CU(B)). The BNC reduces molecular oxygen to 2 water molecules using 4 electrons from cytochrome c in the IMS and 4 protons from the mitochondrial matrix. The protein is Cytochrome c oxidase subunit 2 (mt:CoII) of Drosophila bifasciata (Fruit fly).